The following is a 175-amino-acid chain: Alpha-crystallin B chain (175 aa).

N-acetylmethionine is present on M1. Position 19 is a phosphoserine (S19). S41 is a glycosylation site (O-linked (GlcNAc) serine). A phosphoserine mark is found at S45 and S59. The sHSP domain occupies 56–164; the sequence is RAPSWIDTGL…PERTIPITRE (109 aa). A Zn(2+)-binding site is contributed by H83. Residue K90 is glycosylated (N-linked (Glc) (glycation) lysine). K92 carries the N6-acetyllysine; alternate modification. The N-linked (Glc) (glycation) lysine; alternate glycan is linked to K92. Residues H104, E106, H111, and H119 each contribute to the Zn(2+) site. The tract at residues 144 to 175 is disordered; sequence TVNGPRKQASGPERTIPITREEKPAVTAAPKK. An N6-acetyllysine modification is found at K166. O-linked (GlcNAc) threonine glycosylation occurs at T170.

It belongs to the small heat shock protein (HSP20) family. Heteromer composed of three CRYAA and one CRYAB subunits. Aggregates with homologous proteins, including the small heat shock protein HSPB1, to form large heteromeric complexes. Inter-subunit bridging via zinc ions enhances stability, which is crucial as there is no protein turn over in the lens. Interacts with HSPBAP1 and TTN/titin. Interacts with TMEM109; in the cellular response to DNA damage. Interacts with DES; binds rapidly during early stages of DES filament assembly and a reduced binding seen in the later stages. Interacts with TMED10; the interaction mediates the translocation from the cytoplasm into the ERGIC (endoplasmic reticulum-Golgi intermediate compartment) and thereby secretion. Interacts with ATP6V1A and with MTOR, forming a ternary complex. In terms of processing, it is not known whether either Lys-90, or Lys-92, or both are glycated. In terms of tissue distribution, lens as well as other tissues.

It localises to the cytoplasm. The protein localises to the nucleus. The protein resides in the secreted. It is found in the lysosome. Its function is as follows. May contribute to the transparency and refractive index of the lens. Has chaperone-like activity, preventing aggregation of various proteins under a wide range of stress conditions. In lens epithelial cells, stabilizes the ATP6V1A protein, preventing its degradation by the proteasome. In Bos taurus (Bovine), this protein is Alpha-crystallin B chain (CRYAB).